A 284-amino-acid polypeptide reads, in one-letter code: Bifunctional protein FolD (284 aa).

Residues 164 to 166 (GRS) and Ser-189 contribute to the NADP(+) site.

This sequence belongs to the tetrahydrofolate dehydrogenase/cyclohydrolase family. Homodimer.

The enzyme catalyses (6R)-5,10-methylene-5,6,7,8-tetrahydrofolate + NADP(+) = (6R)-5,10-methenyltetrahydrofolate + NADPH. The catalysed reaction is (6R)-5,10-methenyltetrahydrofolate + H2O = (6R)-10-formyltetrahydrofolate + H(+). It participates in one-carbon metabolism; tetrahydrofolate interconversion. In terms of biological role, catalyzes the oxidation of 5,10-methylenetetrahydrofolate to 5,10-methenyltetrahydrofolate and then the hydrolysis of 5,10-methenyltetrahydrofolate to 10-formyltetrahydrofolate. The polypeptide is Bifunctional protein FolD (Listeria monocytogenes serotype 4b (strain F2365)).